The following is a 246-amino-acid chain: Octanoyltransferase (246 aa).

Residues 46-234 (GTAGEMVWLV…AFEEVFGAAE (189 aa)) form the BPL/LPL catalytic domain. Residues 85–92 (RGGEYTYH), 165–167 (AIG), and 178–180 (GIA) each bind substrate. Catalysis depends on Cys196, which acts as the Acyl-thioester intermediate.

Belongs to the LipB family.

The protein resides in the cytoplasm. The enzyme catalyses octanoyl-[ACP] + L-lysyl-[protein] = N(6)-octanoyl-L-lysyl-[protein] + holo-[ACP] + H(+). Its pathway is protein modification; protein lipoylation via endogenous pathway; protein N(6)-(lipoyl)lysine from octanoyl-[acyl-carrier-protein]: step 1/2. Functionally, catalyzes the transfer of endogenously produced octanoic acid from octanoyl-acyl-carrier-protein onto the lipoyl domains of lipoate-dependent enzymes. Lipoyl-ACP can also act as a substrate although octanoyl-ACP is likely to be the physiological substrate. The sequence is that of Octanoyltransferase from Chelativorans sp. (strain BNC1).